We begin with the raw amino-acid sequence, 147 residues long: Cytochrome c-type biogenesis protein CcmE (147 aa).

Residues 1–7 (MTVRQRR) are Cytoplasmic-facing. Residues 8-28 (FAMVILVVIGVSIATGLGLKA) traverse the membrane as a helical; Signal-anchor for type II membrane protein segment. At 29–147 (FQENILFFYN…KTKANTEDKL (119 aa)) the chain is on the periplasmic side. Heme-binding residues include His123 and Tyr127.

It belongs to the CcmE/CycJ family.

Its subcellular location is the cell inner membrane. In terms of biological role, heme chaperone required for the biogenesis of c-type cytochromes. Transiently binds heme delivered by CcmC and transfers the heme to apo-cytochromes in a process facilitated by CcmF and CcmH. The sequence is that of Cytochrome c-type biogenesis protein CcmE from Nitrosococcus oceani (strain ATCC 19707 / BCRC 17464 / JCM 30415 / NCIMB 11848 / C-107).